The chain runs to 105 residues: Cell division topological specificity factor (105 aa).

Belongs to the MinE family.

Its function is as follows. Prevents the cell division inhibition by proteins MinC and MinD at internal division sites while permitting inhibition at polar sites. This ensures cell division at the proper site by restricting the formation of a division septum at the midpoint of the long axis of the cell. The protein is Cell division topological specificity factor of Prochlorococcus marinus (strain MIT 9515).